Reading from the N-terminus, the 617-residue chain is Chaperone protein DnaK (617 aa).

Thr174 bears the Phosphothreonine; by autocatalysis mark. Low complexity predominate over residues 575 to 592 (AQAQQQAQQQAQGQQGAQ). Residues 575-617 (AQAQQQAQQQAQGQQGAQTDNQTGQNDGKTIDVDYEEVDDDDK) are disordered. A compositionally biased stretch (polar residues) spans 593-602 (TDNQTGQNDG). The span at 607–617 (VDYEEVDDDDK) shows a compositional bias: acidic residues.

The protein belongs to the heat shock protein 70 family.

Acts as a chaperone. The protein is Chaperone protein DnaK of Halothermothrix orenii (strain H 168 / OCM 544 / DSM 9562).